The sequence spans 144 residues: Transcriptional regulator MraZ (144 aa).

SpoVT-AbrB domains follow at residues glutamate 5–arginine 47 and alanine 76–arginine 121.

The protein belongs to the MraZ family. In terms of assembly, forms oligomers.

It localises to the cytoplasm. The protein resides in the nucleoid. The chain is Transcriptional regulator MraZ from Thermus thermophilus (strain ATCC BAA-163 / DSM 7039 / HB27).